Reading from the N-terminus, the 718-residue chain is Sec-independent protein translocase protein TatCt (718 aa).

8 helical membrane passes run 34 to 54 (VFIV…LYVW), 84 to 104 (ILLQ…PPFI), 137 to 157 (LFAA…FAFL), 178 to 198 (FIFL…AMTG), 214 to 231 (WRHA…FTPP), 234 to 254 (FTQI…LYLA), 280 to 300 (LAGV…YGGV), and 325 to 345 (LGAF…AYLV). A disordered region spans residues 421 to 451 (REAEAADAEDEPGELEDRTTRAGGAFVSELT). A compositionally biased stretch (acidic residues) spans 425–434 (AADAEDEPGE). Helical transmembrane passes span 478–498 (AFWV…WLYT), 539–559 (FSTI…VWPA), 572–592 (TVFV…ALGY), 621–641 (FFWL…VPIL), 661–681 (EVTV…ITTM), and 682–702 (FMVT…LFVL).

This sequence belongs to the TatC family. In terms of assembly, forms a complex with TatA.

The protein localises to the cell membrane. Its function is as follows. Part of the twin-arginine translocation (Tat) system that transports large folded proteins containing a characteristic twin-arginine motif in their signal peptide across membranes. The sequence is that of Sec-independent protein translocase protein TatCt from Haloferax volcanii (strain ATCC 29605 / DSM 3757 / JCM 8879 / NBRC 14742 / NCIMB 2012 / VKM B-1768 / DS2) (Halobacterium volcanii).